The primary structure comprises 207 residues: Thiamine-phosphate synthase (207 aa).

Residues 37–41 (QYRDK) and Asn69 contribute to the 4-amino-2-methyl-5-(diphosphooxymethyl)pyrimidine site. Mg(2+) is bound by residues Asp70 and Asp89. Residue Ser108 participates in 4-amino-2-methyl-5-(diphosphooxymethyl)pyrimidine binding. 2-[(2R,5Z)-2-carboxy-4-methylthiazol-5(2H)-ylidene]ethyl phosphate is bound at residue 135 to 137 (SRT). Lys138 provides a ligand contact to 4-amino-2-methyl-5-(diphosphooxymethyl)pyrimidine. Residue Gly164 coordinates 2-[(2R,5Z)-2-carboxy-4-methylthiazol-5(2H)-ylidene]ethyl phosphate.

It belongs to the thiamine-phosphate synthase family. Requires Mg(2+) as cofactor.

The catalysed reaction is 2-[(2R,5Z)-2-carboxy-4-methylthiazol-5(2H)-ylidene]ethyl phosphate + 4-amino-2-methyl-5-(diphosphooxymethyl)pyrimidine + 2 H(+) = thiamine phosphate + CO2 + diphosphate. The enzyme catalyses 2-(2-carboxy-4-methylthiazol-5-yl)ethyl phosphate + 4-amino-2-methyl-5-(diphosphooxymethyl)pyrimidine + 2 H(+) = thiamine phosphate + CO2 + diphosphate. It carries out the reaction 4-methyl-5-(2-phosphooxyethyl)-thiazole + 4-amino-2-methyl-5-(diphosphooxymethyl)pyrimidine + H(+) = thiamine phosphate + diphosphate. The protein operates within cofactor biosynthesis; thiamine diphosphate biosynthesis; thiamine phosphate from 4-amino-2-methyl-5-diphosphomethylpyrimidine and 4-methyl-5-(2-phosphoethyl)-thiazole: step 1/1. Functionally, condenses 4-methyl-5-(beta-hydroxyethyl)thiazole monophosphate (THZ-P) and 2-methyl-4-amino-5-hydroxymethyl pyrimidine pyrophosphate (HMP-PP) to form thiamine monophosphate (TMP). This Chromobacterium violaceum (strain ATCC 12472 / DSM 30191 / JCM 1249 / CCUG 213 / NBRC 12614 / NCIMB 9131 / NCTC 9757 / MK) protein is Thiamine-phosphate synthase.